Consider the following 347-residue polypeptide: NADH-ubiquinone oxidoreductase chain 2 (347 aa).

The next 11 helical transmembrane spans lie at 5–22, 26–45, 60–80, 96–116, 122–142, 153–173, 178–198, 200–220, 237–257, 274–294, and 325–345; these read ILIT…IVLF, WFMI…PILM, FLTQ…NLLC, TMIT…FWVP, ISLS…LSIL, LLLM…LNQT, ILAY…VYNP, LAIL…MLFM, FPLM…LPPL, DMII…YFYT, and LLAP…MLAA.

This sequence belongs to the complex I subunit 2 family. In terms of assembly, core subunit of respiratory chain NADH dehydrogenase (Complex I) which is composed of 45 different subunits. Interacts with TMEM242.

It is found in the mitochondrion inner membrane. It carries out the reaction a ubiquinone + NADH + 5 H(+)(in) = a ubiquinol + NAD(+) + 4 H(+)(out). Its function is as follows. Core subunit of the mitochondrial membrane respiratory chain NADH dehydrogenase (Complex I) which catalyzes electron transfer from NADH through the respiratory chain, using ubiquinone as an electron acceptor. Essential for the catalytic activity and assembly of complex I. The chain is NADH-ubiquinone oxidoreductase chain 2 from Ailuropoda melanoleuca (Giant panda).